Consider the following 201-residue polypeptide: 3-isopropylmalate dehydratase small subunit (201 aa).

This sequence belongs to the LeuD family. LeuD type 1 subfamily. Heterodimer of LeuC and LeuD.

The catalysed reaction is (2R,3S)-3-isopropylmalate = (2S)-2-isopropylmalate. Its pathway is amino-acid biosynthesis; L-leucine biosynthesis; L-leucine from 3-methyl-2-oxobutanoate: step 2/4. In terms of biological role, catalyzes the isomerization between 2-isopropylmalate and 3-isopropylmalate, via the formation of 2-isopropylmaleate. This is 3-isopropylmalate dehydratase small subunit from Escherichia coli O45:K1 (strain S88 / ExPEC).